A 1143-amino-acid chain; its full sequence is cGMP-specific 3',5'-cyclic phosphodiesterase (1143 aa).

2 stretches are compositionally biased toward low complexity: residues 1–19 and 31–45; these read MHGP…DVSS and TTSS…ASSS. A disordered region spans residues 1-167; sequence MHGPVSRSSS…KASTTASQQD (167 aa). The span at 46 to 59 shows a compositional bias: polar residues; that stretch reads KPLTNGANKTTIST. Residues 75–84 are compositionally biased toward low complexity; that stretch reads GAIPASSSSG. Over residues 96–107 the composition is skewed to polar residues; it reads SNNNRPAATNRS. Over residues 131–153 the composition is skewed to low complexity; that stretch reads SSSSPSQSPSQTQASIQTQTSQQ. 2 consecutive GAF domains span residues 272-424 and 456-637; these read DIDV…GIGI and NLEC…GLGI. One can recognise a PDEase domain in the interval 667–990; that stretch reads SQDQTEKLTQ…RNWQDLAEKV (324 aa). The active-site Proton donor is H743. Residues H747, H783, D784, and D894 each coordinate a divalent metal cation. 2 disordered regions span residues 1031 to 1060 and 1090 to 1143; these read QQSQ…TGAL and SHVS…CALL. Basic and acidic residues-rich tracts occupy residues 1036 to 1047 and 1090 to 1100; these read GSEDSHTPEHQR and SHVSEDMDDKS. A compositionally biased stretch (low complexity) spans 1109 to 1127; that stretch reads ASGSMGRMSASSSTSSTGG. Positions 1133-1143 are enriched in basic residues; sequence SKKRSKLCALL. C1140 carries the cysteine methyl ester modification. C1140 carries the S-farnesyl cysteine lipid modification. A propeptide spans 1141 to 1143 (removed in mature form); sequence ALL.

This sequence belongs to the cyclic nucleotide phosphodiesterase family. Interacts with PrBP. The cofactor is a divalent metal cation.

It is found in the cell membrane. The catalysed reaction is 3',5'-cyclic GMP + H2O = GMP + H(+). Its function is as follows. Has a role regulating cGMP transport in Malpighian tubule principal cells. In Drosophila simulans (Fruit fly), this protein is cGMP-specific 3',5'-cyclic phosphodiesterase.